Consider the following 143-residue polypeptide: Nucleoside diphosphate kinase (143 aa).

ATP contacts are provided by lysine 11, phenylalanine 59, arginine 87, threonine 93, arginine 104, and asparagine 114. Histidine 117 functions as the Pros-phosphohistidine intermediate in the catalytic mechanism.

The protein belongs to the NDK family. In terms of assembly, homotetramer. Mg(2+) is required as a cofactor.

It is found in the cytoplasm. It carries out the reaction a 2'-deoxyribonucleoside 5'-diphosphate + ATP = a 2'-deoxyribonucleoside 5'-triphosphate + ADP. It catalyses the reaction a ribonucleoside 5'-diphosphate + ATP = a ribonucleoside 5'-triphosphate + ADP. Its function is as follows. Major role in the synthesis of nucleoside triphosphates other than ATP. The ATP gamma phosphate is transferred to the NDP beta phosphate via a ping-pong mechanism, using a phosphorylated active-site intermediate. This chain is Nucleoside diphosphate kinase, found in Shewanella piezotolerans (strain WP3 / JCM 13877).